We begin with the raw amino-acid sequence, 416 residues long: Serine hydroxymethyltransferase (416 aa).

(6S)-5,6,7,8-tetrahydrofolate-binding positions include Leu121 and 125–127 (GHL). Lys229 bears the N6-(pyridoxal phosphate)lysine mark.

It belongs to the SHMT family. As to quaternary structure, homodimer. The cofactor is pyridoxal 5'-phosphate.

The protein resides in the cytoplasm. It catalyses the reaction (6R)-5,10-methylene-5,6,7,8-tetrahydrofolate + glycine + H2O = (6S)-5,6,7,8-tetrahydrofolate + L-serine. It participates in one-carbon metabolism; tetrahydrofolate interconversion. The protein operates within amino-acid biosynthesis; glycine biosynthesis; glycine from L-serine: step 1/1. Functionally, catalyzes the reversible interconversion of serine and glycine with tetrahydrofolate (THF) serving as the one-carbon carrier. This reaction serves as the major source of one-carbon groups required for the biosynthesis of purines, thymidylate, methionine, and other important biomolecules. Also exhibits THF-independent aldolase activity toward beta-hydroxyamino acids, producing glycine and aldehydes, via a retro-aldol mechanism. This chain is Serine hydroxymethyltransferase, found in Dechloromonas aromatica (strain RCB).